We begin with the raw amino-acid sequence, 496 residues long: Glutamyl-tRNA(Gln) amidotransferase subunit A (496 aa).

Active-site charge relay system residues include lysine 75 and serine 150. Serine 174 (acyl-ester intermediate) is an active-site residue.

This sequence belongs to the amidase family. GatA subfamily. Heterotrimer of A, B and C subunits.

The catalysed reaction is L-glutamyl-tRNA(Gln) + L-glutamine + ATP + H2O = L-glutaminyl-tRNA(Gln) + L-glutamate + ADP + phosphate + H(+). Allows the formation of correctly charged Gln-tRNA(Gln) through the transamidation of misacylated Glu-tRNA(Gln) in organisms which lack glutaminyl-tRNA synthetase. The reaction takes place in the presence of glutamine and ATP through an activated gamma-phospho-Glu-tRNA(Gln). This chain is Glutamyl-tRNA(Gln) amidotransferase subunit A, found in Burkholderia cenocepacia (strain HI2424).